A 961-amino-acid polypeptide reads, in one-letter code: Autophagy-related protein 9 (961 aa).

Disordered regions lie at residues 1-91, 126-180, 198-225, and 244-265; these read MGDS…IKAN, KVGQ…SVNF, KDSKSNGEASNKMFTSSNQGNHNYKYRN, and SLFGSHEAGGHKSHNSAPSKGP. Residues 1-324 lie on the Cytoplasmic side of the membrane; the sequence is MGDSESVNQD…SGFSCIVLRK (324 aa). Residues 132–160 are compositionally biased toward acidic residues; that stretch reads SDEEDDGSLSNEEEDIDEEDEIDEIDADE. Over residues 203–219 the composition is skewed to polar residues; the sequence is NGEASNKMFTSSNQGNH. Residues 325–345 traverse the membrane as a helical segment; that stretch reads LLNLTTLIFVVYISTYLGYCI. Residues 346 to 374 lie on the Lumenal side of the membrane; sequence DYSKLPTSSRLSDIIIDQCYTTRITGITK. A helical transmembrane segment spans residues 375–395; the sequence is GLLWVFYVFVGLKVVQFYFDL. The Cytoplasmic portion of the chain corresponds to 396-536; sequence QNLTDMHNFY…EELRKRFMLA (141 aa). Residues 537–557 lie within the membrane without spanning it; it reads GFLNIILSPFLVTYFVLLYFL. Topologically, residues 558–617 are cytoplasmic; that stretch reads RYFNEFKTSPGTIGARQYTPMAEWTFREFNELYHIFQKRLGLSTVIADKYINQFPKESTD. Residues 618 to 638 form a helical membrane-spanning segment; it reads LILKFISFISGSFVAVLMSLT. The Lumenal portion of the chain corresponds to 639–654; sequence LLDSENFLNFEVTKDR. A helical transmembrane segment spans residues 655–675; sequence SVLFYITVFGAIWSVCRNSIS. Topologically, residues 676–721 are cytoplasmic; the sequence is DEYKVYDPDETIKELSEFTHYLPKEWEGKHHTEDVKQEFCKLYNIR. Residues 722 to 742 lie within the membrane without spanning it; that stretch reads LIILLRELASLVLTPFILWFS. The Cytoplasmic segment spans residues 743–961; sequence LPACSDRIVD…DYYKTSDIGR (219 aa). Positions 900–918 are enriched in polar residues; the sequence is GKKSTLNSENPYDNSSNLG. The tract at residues 900–940 is disordered; the sequence is GKKSTLNSENPYDNSSNLGESFINPTIMPDRDLGRNGVNGG.

The protein belongs to the ATG9 family. As to quaternary structure, homotrimer; forms a homotrimer with a central pore that forms a path between the two membrane leaflets. Post-translationally, phosphorylated by ATG1. ATG1 phosphorylation is required for preautophagosome elongation.

It is found in the preautophagosomal structure membrane. The protein localises to the cytoplasmic vesicle membrane. It localises to the golgi apparatus membrane. Its subcellular location is the endoplasmic reticulum membrane. It catalyses the reaction a 1,2-diacyl-sn-glycero-3-phosphocholine(in) = a 1,2-diacyl-sn-glycero-3-phosphocholine(out). The catalysed reaction is a 1,2-diacyl-sn-glycero-3-phospho-L-serine(in) = a 1,2-diacyl-sn-glycero-3-phospho-L-serine(out). The enzyme catalyses a 1,2-diacyl-sn-glycero-3-phosphoethanolamine(in) = a 1,2-diacyl-sn-glycero-3-phosphoethanolamine(out). It carries out the reaction a 1,2-diacyl-sn-glycero-3-phospho-(1D-myo-inositol-3-phosphate)(in) = a 1,2-diacyl-sn-glycero-3-phospho-(1D-myo-inositol-3-phosphate)(out). In terms of biological role, phospholipid scramblase involved in autophagy and cytoplasm to vacuole transport (Cvt) vesicle formation. Cycles between the preautophagosomal structure/phagophore assembly site (PAS) and the cytoplasmic vesicle pool and supplies membrane for the growing autophagosome. Lipid scramblase activity plays a key role in preautophagosomal structure/phagophore assembly by distributing the phospholipids that arrive through ATG2 from the cytoplasmic to the luminal leaflet of the bilayer, thereby driving autophagosomal membrane expansion. Required for mitophagy. Also involved in endoplasmic reticulum-specific autophagic process and is essential for the survival of cells subjected to severe ER stress. Different machineries are required for anterograde trafficking to the PAS during either the Cvt pathway or bulk autophagy and for retrograde trafficking. The sequence is that of Autophagy-related protein 9 (ATG9) from Vanderwaltozyma polyspora (strain ATCC 22028 / DSM 70294 / BCRC 21397 / CBS 2163 / NBRC 10782 / NRRL Y-8283 / UCD 57-17) (Kluyveromyces polysporus).